The primary structure comprises 154 residues: Large ribosomal subunit protein uL13 (154 aa).

Belongs to the universal ribosomal protein uL13 family. Part of the 50S ribosomal subunit.

Functionally, this protein is one of the early assembly proteins of the 50S ribosomal subunit, although it is not seen to bind rRNA by itself. It is important during the early stages of 50S assembly. The protein is Large ribosomal subunit protein uL13 of Bartonella tribocorum (strain CIP 105476 / IBS 506).